The sequence spans 319 residues: Protoheme IX farnesyltransferase (319 aa).

Transmembrane regions (helical) follow at residues 34 to 54 (VMSLVVFTAFAGLVLAPGHIN), 55 to 75 (PVLGLIAILCIAVGAGASGAL), 95 to 115 (IPAGRVAPSEALAFGLVLSGF), 119 to 139 (ILGLAVNWLSAAILAFTIFFY), 155 to 175 (IVIGGAAGAFPPVIGWACVTG), 182 to 202 (VVLFLIIFLWTPAHFWALALF), 221 to 241 (VPTTKNQIVAYAVLTAIIGVV), 244 to 264 (FMGFASLGYGVVATVLGVIFV), and 291 to 311 (IFYLFAIFSALLIDRLVAVLM).

It belongs to the UbiA prenyltransferase family. Protoheme IX farnesyltransferase subfamily.

It localises to the cell inner membrane. The catalysed reaction is heme b + (2E,6E)-farnesyl diphosphate + H2O = Fe(II)-heme o + diphosphate. The protein operates within porphyrin-containing compound metabolism; heme O biosynthesis; heme O from protoheme: step 1/1. Converts heme B (protoheme IX) to heme O by substitution of the vinyl group on carbon 2 of heme B porphyrin ring with a hydroxyethyl farnesyl side group. In Rhizobium rhizogenes (strain K84 / ATCC BAA-868) (Agrobacterium radiobacter), this protein is Protoheme IX farnesyltransferase.